The following is an 859-amino-acid chain: Heat shock protein 105 kDa (859 aa).

At S2 the chain carries N-acetylserine. N6-acetyllysine is present on K471. S509 and S510 each carry phosphoserine. Disordered regions lie at residues 515 to 585 (MDCQ…PPEA) and 797 to 859 (CEPV…MDLD). Positions 533 to 555 (QQDNNEAGTQPQVQTDGHQTSQS) are enriched in polar residues. Position 558 is a phosphoserine (S558). A Phosphothreonine modification is found at T562. 2 stretches are compositionally biased toward basic and acidic residues: residues 564–585 (EENK…PPEA) and 806–815 (PKIESPKLER). S810 carries the post-translational modification Phosphoserine. T816 carries the phosphothreonine modification. Residues 822-831 (TDKKEEDLDG) show a composition bias toward basic and acidic residues. Over residues 850-859 (EKSSINMDLD) the composition is skewed to polar residues.

Belongs to the heat shock protein 70 family. As to quaternary structure, interacts with HSPA8/HSC70. Interacts with HSPA1A (via NBD) and HSPA1B (via NBD). In terms of processing, phosphorylation on Ser-509 may be important for regulation of the HSPA8/HSC70 chaperone activity.

The protein localises to the cytoplasm. In terms of biological role, acts as a nucleotide-exchange factor (NEF) for chaperone proteins HSPA1A and HSPA1B, promoting the release of ADP from HSPA1A/B thereby triggering substrate release. Prevents the aggregation of denatured proteins in cells under severe stress, on which the ATP levels decrease markedly. Inhibits HSPA8/HSC70 ATPase and chaperone activities. This chain is Heat shock protein 105 kDa (HSPH1), found in Bos taurus (Bovine).